Here is a 137-residue protein sequence, read N- to C-terminus: Ribosomal RNA large subunit methyltransferase H (137 aa).

S-adenosyl-L-methionine is bound by residues L56, G85, and 104-109 (LSPLTF).

It belongs to the RNA methyltransferase RlmH family. In terms of assembly, homodimer.

It is found in the cytoplasm. The enzyme catalyses pseudouridine(1915) in 23S rRNA + S-adenosyl-L-methionine = N(3)-methylpseudouridine(1915) in 23S rRNA + S-adenosyl-L-homocysteine + H(+). In terms of biological role, specifically methylates the pseudouridine at position 1915 (m3Psi1915) in 23S rRNA. This chain is Ribosomal RNA large subunit methyltransferase H, found in Prochlorococcus marinus subsp. pastoris (strain CCMP1986 / NIES-2087 / MED4).